Here is a 340-residue protein sequence, read N- to C-terminus: Ephrin-B3 (340 aa).

An N-terminal signal peptide occupies residues M1 to G27. The Ephrin RBD domain occupies L28–V167. Residues L28 to P226 lie on the Extracellular side of the membrane. Intrachain disulfides connect C62–C104 and C92–C156. The segment at G168 to M225 is disordered. Over residues P185–K200 the composition is skewed to basic and acidic residues. Residue N210 is glycosylated (N-linked (GlcNAc...) asparagine). The helical transmembrane segment at A227–G247 threads the bilayer. Topologically, residues A248–V340 are cytoplasmic. Positions R254–R298 are disordered. The span at G267–G284 shows a compositional bias: gly residues. R271 is modified (omega-N-methylarginine). Residue S274 is modified to Phosphoserine. A PDZ-binding motif is present at residues Y338–V340.

The protein belongs to the ephrin family. In terms of assembly, interacts with GRIP1 and GRIP2. As to quaternary structure, (Microbial infection) Interacts with nipah virus and hendra virus glycoprotein. In terms of tissue distribution, highly expressed in brain; expressed in embryonic floor plate, roof plate and hindbrain segments.

It localises to the membrane. Functionally, cell surface transmembrane ligand for Eph receptors, a family of receptor tyrosine kinases which are crucial for migration, repulsion and adhesion during neuronal, vascular and epithelial development. Binds promiscuously Eph receptors residing on adjacent cells, leading to contact-dependent bidirectional signaling into neighboring cells. The signaling pathway downstream of the receptor is referred to as forward signaling while the signaling pathway downstream of the ephrin ligand is referred to as reverse signaling. May play a pivotal role in forebrain function. Binds to, and induce the collapse of, commissural axons/growth cones in vitro. May play a role in constraining the orientation of longitudinally projecting axons. (Microbial infection) Acts as a receptor for nipah virus and hendra virus. This Homo sapiens (Human) protein is Ephrin-B3 (EFNB3).